The chain runs to 138 residues: U1 small nuclear ribonucleoprotein C (138 aa).

The Matrin-type zinc-finger motif lies at 4-36; sequence YYCDYCDTFLTHDSPSVRKTHNNGRKHKENVRF. Residues 58-138 are disordered; it reads QSKPNSQMPP…MGRPPMSLRS (81 aa). The span at 67–109 shows a compositional bias: pro residues; sequence PNAPPGLMPPPGMLPPPGGMPPGRMPPQGLPFPPPGPIPPPPG. Low complexity predominate over residues 113-138; it reads MRPPHGQMHMGGPRPQMGRPPMSLRS.

The protein belongs to the U1 small nuclear ribonucleoprotein C family. As to quaternary structure, U1 snRNP is composed of the 7 core Sm proteins B/B', D1, D2, D3, E, F and G that assemble in a heptameric protein ring on the Sm site of the small nuclear RNA to form the core snRNP, and at least 3 U1 snRNP-specific proteins U1-70K, U1-A and U1-C. U1-C interacts with U1 snRNA and the 5' splice-site region of the pre-mRNA.

The protein resides in the nucleus. Its function is as follows. Component of the spliceosomal U1 snRNP, which is essential for recognition of the pre-mRNA 5' splice-site and the subsequent assembly of the spliceosome. U1-C is directly involved in initial 5' splice-site recognition for both constitutive and regulated alternative splicing. The interaction with the 5' splice-site seems to precede base-pairing between the pre-mRNA and the U1 snRNA. Stimulates commitment or early (E) complex formation by stabilizing the base pairing of the 5' end of the U1 snRNA and the 5' splice-site region. The polypeptide is U1 small nuclear ribonucleoprotein C (Nematostella vectensis (Starlet sea anemone)).